Reading from the N-terminus, the 369-residue chain is Serine proteinase inhibitor 1 (369 aa).

Belongs to the serpin family. Poxviruses subfamily.

Functionally, important in virulence. The chain is Serine proteinase inhibitor 1 (SPI-1) from Oryctolagus cuniculus (Rabbit).